A 740-amino-acid chain; its full sequence is Catalase-peroxidase (740 aa).

A disordered region spans residues 1 to 32; that stretch reads MPEDRPIEDSPPIGEAQTDAPAGGCPAGFGRI. Residues 113-237 constitute a cross-link (tryptophyl-tyrosyl-methioninium (Trp-Tyr) (with M-263)); sequence WHAAGTYRVS…LAAVQMGLIY (125 aa). Residue histidine 114 is the Proton acceptor of the active site. The tryptophyl-tyrosyl-methioninium (Tyr-Met) (with W-113) cross-link spans 237–263; sequence YVNPEGPNGNPDPQASAIDIRETFGRM. Histidine 278 contributes to the heme b binding site.

Belongs to the peroxidase family. Peroxidase/catalase subfamily. As to quaternary structure, homodimer or homotetramer. The cofactor is heme b. In terms of processing, formation of the three residue Trp-Tyr-Met cross-link is important for the catalase, but not the peroxidase activity of the enzyme.

It catalyses the reaction H2O2 + AH2 = A + 2 H2O. The enzyme catalyses 2 H2O2 = O2 + 2 H2O. Bifunctional enzyme with both catalase and broad-spectrum peroxidase activity. May play a role in the intracellular survival of mycobacteria. The chain is Catalase-peroxidase from Mycolicibacterium smegmatis (Mycobacterium smegmatis).